An 894-amino-acid chain; its full sequence is MSEGQIPSSDVLGSQLGVGVQGASLYCPQENYTTKKQEKPQWLRPVDDTLAEDALDLHIVVKSLLCDTAIRYISDDKVLQESDADDDLITSDIDEDTDNQGDTSIVVNPVIPVVPKDVHFFKKVDVGNDSMFGVNCDTPVSFQDYIPSDLLRNLDDTLQESTNSSRPMQDAFFWDPTVANRLDSQYIQTASDLRNYRDGTEIIAYASGKTGSVLNIAVLTRQNTLHLNRHNNVTSIELHSPIKSIKIPGASESIGRRSNLVGIITENSFQIFRIESVHSRSCDVMVSSSEPLYFVEIDDLQVVDFAFNPWDLQQFAIIDIKGNWSIGRIPKNFNNNNKRKLQLIDNLHGTIFDPEELSSWKRIEWFSHFQKILVFDRSKMIEIDFMNNWQTEVVQAKAWSNIRDYKRIDDKNGILLTSREIIIVGASESNDPVRRISWKHDLDPDDTTLRITVQKVKKPDHILLVAFVYSMRHKRIYMHVFSHRKANLFQSLGCSTVLEIPGGTPTGIETILTLDHIDDESRREEDADENFELVVDFLVKLRNSSEVYYYALSNTQNSEPNKQETPIIVDHPEWASLFNNADEREKESIGALVSQIKLKERERISRVQNLIEHENSHDEDKYLQDLGYRLSIATNELLESWQKTKDESILSGSLSHSKLKNLLENSDSFASIPEFSSLLDQFFQYYQDQDVTFIGFEKLLHLFLHEDVPGLDIFYNKLLQCWVLVSPQAELLTKEIVKDIIWSLARLEKPSLFEPIQNEISRSLSGPYQDIISSWDMDDINEEDESNEFNFDSQFSAPFNGRPPFNLNSQSQIPTIKSSQSSGLARRKRILKTQSQKATPLSQSTQNLSVLPDSMTPAFTLMQPPSSQISFVNDSQPRNSQKAKKKKKRIRGFG.

Residues 803 to 894 form a disordered region; the sequence is PPFNLNSQSQ…KKKKRIRGFG (92 aa). Polar residues-rich tracts occupy residues 806–823, 832–849, and 863–880; these read NLNS…QSSG, KTQS…QNLS, and QPPS…PRNS. Over residues 881-894 the composition is skewed to basic residues; sequence QKAKKKKKRIRGFG.

Component of the core factor (CF) complex, which consists of RRN6, RRN7 and RRN11. The CF heterotrimer may further dimerize to form a hexamer. RRN6 interacts with RRN7, RRN11 and RRN9.

It localises to the cytoplasm. The protein localises to the nucleus. Its subcellular location is the nucleolus. In terms of biological role, acts as a component of the core factor (CF) complex which is essential for the initiation of rDNA transcription by RNA polymerase I. After binding of UAF (upstream activation factor) to an upstream element of the promoter, CF is recruited in a SPT15/TBP-dependent manner to form a preinitiation complex. The sequence is that of RNA polymerase I-specific transcription initiation factor RRN6 (RRN6) from Saccharomyces cerevisiae (strain ATCC 204508 / S288c) (Baker's yeast).